Reading from the N-terminus, the 154-residue chain is General odorant-binding protein 83a (154 aa).

Residues 1–33 form the signal peptide; the sequence is MALNGFGRRVSASVLLIALSLLSGALILPPAAA. 3 disulfide bridges follow: cysteine 55-cysteine 86, cysteine 82-cysteine 133, and cysteine 124-cysteine 142.

Belongs to the PBP/GOBP family. In terms of tissue distribution, in the ventrolateral region of the antenna, expressed in two distinct types of olfactory hairs: in most sensilla trichodea and in a subset of the small sensilla basiconica (at protein level).

Its subcellular location is the secreted. In Drosophila melanogaster (Fruit fly), this protein is General odorant-binding protein 83a (Obp83a).